The primary structure comprises 189 residues: Threonylcarbamoyl-AMP synthase (189 aa).

The YrdC-like domain occupies 7-189; the sequence is NPRVNYAANM…LLTGQVVRPS (183 aa).

Belongs to the SUA5 family. TsaC subfamily.

The protein resides in the cytoplasm. It catalyses the reaction L-threonine + hydrogencarbonate + ATP = L-threonylcarbamoyladenylate + diphosphate + H2O. Required for the formation of a threonylcarbamoyl group on adenosine at position 37 (t(6)A37) in tRNAs that read codons beginning with adenine. Catalyzes the conversion of L-threonine, HCO(3)(-)/CO(2) and ATP to give threonylcarbamoyl-AMP (TC-AMP) as the acyladenylate intermediate, with the release of diphosphate. This Cellvibrio japonicus (strain Ueda107) (Pseudomonas fluorescens subsp. cellulosa) protein is Threonylcarbamoyl-AMP synthase.